The primary structure comprises 332 residues: Melanocortin receptor 4 (332 aa).

At 1–43 (MNSTHHHGMHTSLHFWNRSTYGLHSNASEPLGKGYSEGGCYEQ) the chain is on the extracellular side. N-linked (GlcNAc...) asparagine glycans are attached at residues Asn2, Asn17, and Asn26. Intrachain disulfides connect Cys40–Cys279 and Cys271–Cys277. Residues 44–69 (LFVSPEVFVTLGVISLLENILVIVAI) form a helical membrane-spanning segment. The Cytoplasmic segment spans residues 70–81 (AKNKNLHSPMYF). Residues 82-106 (FICSLAVADMLVSVSNGSETIVITL) traverse the membrane as a helical segment. Ca(2+) is bound by residues Glu100, Asp122, and Asp126. Topologically, residues 107 to 123 (LNSTDTDAQSFTVNIDN) are extracellular. The helical transmembrane segment at 124–145 (VIDSVICSSLLASICSLLSIAV) threads the bilayer. At 146–165 (DRYFTIFYALQYHNIMTVKR) the chain is on the cytoplasmic side. The chain crosses the membrane as a helical span at residues 166–186 (VGIIISCIWAVCTVSGVLFII). At 187 to 191 (YSDSS) the chain is on the extracellular side. The helical transmembrane segment at 192–215 (AVIICLITVFFTMLALMASLYVHM) threads the bilayer. Topologically, residues 216–248 (FLMARLHIKRIAVLPGTGTIRQGANMKGAITLT) are cytoplasmic. The chain crosses the membrane as a helical span at residues 249-271 (ILIGVFVVCWAPFFLHLIFYISC). Topologically, residues 272-280 (PQNPYCVCF) are extracellular. The chain crosses the membrane as a helical span at residues 281–304 (MSHFNLYLILIMCNSIIDPLIYAL). Over 305–332 (RSQELRKTFKEIICCYPLGGLCDLSSRY) the chain is Cytoplasmic. Cys318 is lipidated: S-palmitoyl cysteine.

The protein belongs to the G-protein coupled receptor 1 family. Homodimer; disulfide-linked, also forms higher order oligomers. Interacts with GNAS. Interacts with ATRNL1. Interacts with MGRN1; this interaction competes with GNAS-binding and thus inhibits agonist-induced cAMP production. Interacts with MRAP and MRAP2; these associated factors increase ligand-sensitivity and generation of cAMP.

The protein localises to the cell membrane. In terms of biological role, hormone receptor that acts as a key component of the leptin-melanocortin pathway at the intersection of homeostatic maintenance of energetic state. Plays a role in regulating food intake: activation by a stimulating hormone such as anorexigenic alpha-melanocyte stimulating hormone (alpha-MSH) inhibits appetite, whereas binding to a natural antagonist like Agouti-related protein/AGRP promotes appetite. G-protein-coupled receptor that activates conventional Galphas signaling leading to induction of anorexogenic signaling in the hypothalamus to result in negative energy balance. Regulates the firing activity of neurons from the hypothalamus by alpha-MSH and AGRP independently of Galphas signaling by ligand-induced coupling of closure of inwardly rectifying potassium channel KCNJ13. In intestinal epithelial cells, plays a role in the inhibition of hepatic glucose production via nesfatin-1/NUCB2 leading to increased cyclic adenosine monophosphate (cAMP) levels and glucagon-like peptide 1 (GLP-1) secretion in the intestinal epithelium. This Sus scrofa (Pig) protein is Melanocortin receptor 4 (MC4R).